The chain runs to 181 residues: Acireductone dioxygenase (181 aa).

Residues His97, His99, Glu103, and His141 each contribute to the Fe(2+) site. Residues His97, His99, Glu103, and His141 each coordinate Ni(2+).

This sequence belongs to the acireductone dioxygenase (ARD) family. As to quaternary structure, monomer. It depends on Fe(2+) as a cofactor. Ni(2+) serves as cofactor.

It catalyses the reaction 1,2-dihydroxy-5-(methylsulfanyl)pent-1-en-3-one + O2 = 3-(methylsulfanyl)propanoate + CO + formate + 2 H(+). It carries out the reaction 1,2-dihydroxy-5-(methylsulfanyl)pent-1-en-3-one + O2 = 4-methylsulfanyl-2-oxobutanoate + formate + 2 H(+). Its pathway is amino-acid biosynthesis; L-methionine biosynthesis via salvage pathway; L-methionine from S-methyl-5-thio-alpha-D-ribose 1-phosphate: step 5/6. Functionally, catalyzes 2 different reactions between oxygen and the acireductone 1,2-dihydroxy-3-keto-5-methylthiopentene (DHK-MTPene) depending upon the metal bound in the active site. Fe-containing acireductone dioxygenase (Fe-ARD) produces formate and 2-keto-4-methylthiobutyrate (KMTB), the alpha-ketoacid precursor of methionine in the methionine recycle pathway. Ni-containing acireductone dioxygenase (Ni-ARD) produces methylthiopropionate, carbon monoxide and formate, and does not lie on the methionine recycle pathway. The sequence is that of Acireductone dioxygenase from Pseudomonas aeruginosa (strain UCBPP-PA14).